Reading from the N-terminus, the 313-residue chain is Ribosomal RNA small subunit methyltransferase H (313 aa).

S-adenosyl-L-methionine-binding positions include 35 to 37 (GGH), D55, F79, D101, and Q108.

The protein belongs to the methyltransferase superfamily. RsmH family.

The protein resides in the cytoplasm. It catalyses the reaction cytidine(1402) in 16S rRNA + S-adenosyl-L-methionine = N(4)-methylcytidine(1402) in 16S rRNA + S-adenosyl-L-homocysteine + H(+). Specifically methylates the N4 position of cytidine in position 1402 (C1402) of 16S rRNA. This is Ribosomal RNA small subunit methyltransferase H from Salmonella agona (strain SL483).